The primary structure comprises 413 residues: Cell division protein FtsZ 2 (413 aa).

GTP is bound by residues 132–134, Glu171, Arg175, and Asp218; that span reads GTG.

The protein belongs to the FtsZ family. In terms of assembly, homodimer. Polymerizes to form a dynamic ring structure in a strictly GTP-dependent manner. Interacts directly with several other division proteins.

The protein localises to the cytoplasm. In terms of biological role, essential cell division protein that forms a contractile ring structure (Z ring) at the future cell division site. The regulation of the ring assembly controls the timing and the location of cell division. One of the functions of the FtsZ ring is to recruit other cell division proteins to the septum to produce a new cell wall between the dividing cells. Binds GTP and shows GTPase activity. This Thermococcus kodakarensis (strain ATCC BAA-918 / JCM 12380 / KOD1) (Pyrococcus kodakaraensis (strain KOD1)) protein is Cell division protein FtsZ 2.